Reading from the N-terminus, the 88-residue chain is Translation initiation factor IF-1 3 (88 aa).

Positions 1–72 (MAKEELLELD…TKGCINFRHK (72 aa)) constitute an S1-like domain.

The protein belongs to the IF-1 family. Component of the 30S ribosomal translation pre-initiation complex which assembles on the 30S ribosome in the order IF-2 and IF-3, IF-1 and N-formylmethionyl-tRNA(fMet); mRNA recruitment can occur at any time during PIC assembly.

The protein localises to the cytoplasm. Its function is as follows. One of the essential components for the initiation of protein synthesis. Stabilizes the binding of IF-2 and IF-3 on the 30S subunit to which N-formylmethionyl-tRNA(fMet) subsequently binds. Helps modulate mRNA selection, yielding the 30S pre-initiation complex (PIC). Upon addition of the 50S ribosomal subunit IF-1, IF-2 and IF-3 are released leaving the mature 70S translation initiation complex. This chain is Translation initiation factor IF-1 3, found in Burkholderia orbicola (strain AU 1054).